Here is a 418-residue protein sequence, read N- to C-terminus: Tyrosine--tRNA ligase (418 aa).

Residue Tyr34 coordinates L-tyrosine. Residues 39-48 carry the 'HIGH' region motif; it reads PTADSLHLGH. L-tyrosine-binding residues include Tyr169 and Gln173. A 'KMSKS' region motif is present at residues 229 to 233; sequence KFGKS. Lys232 lines the ATP pocket. Positions 352-418 constitute an S4 RNA-binding domain; the sequence is NNIVELLVSS…GKKKYFVLTY (67 aa).

It belongs to the class-I aminoacyl-tRNA synthetase family. TyrS type 1 subfamily. Homodimer.

It localises to the cytoplasm. It catalyses the reaction tRNA(Tyr) + L-tyrosine + ATP = L-tyrosyl-tRNA(Tyr) + AMP + diphosphate + H(+). Catalyzes the attachment of tyrosine to tRNA(Tyr) in a two-step reaction: tyrosine is first activated by ATP to form Tyr-AMP and then transferred to the acceptor end of tRNA(Tyr). The polypeptide is Tyrosine--tRNA ligase (Streptococcus pneumoniae serotype 19F (strain G54)).